The sequence spans 173 residues: Photosystem I assembly protein Ycf3 (173 aa).

TPR repeat units follow at residues 35–68 (AFVY…EDDA), 72–105 (SYIL…NPNL), and 120–153 (GERA…APNN).

This sequence belongs to the Ycf3 family.

It is found in the cellular thylakoid membrane. Functionally, essential for the assembly of the photosystem I (PSI) complex. May act as a chaperone-like factor to guide the assembly of the PSI subunits. In Gloeothece citriformis (strain PCC 7424) (Cyanothece sp. (strain PCC 7424)), this protein is Photosystem I assembly protein Ycf3.